The primary structure comprises 440 residues: Aclacinomycin-T 2-deoxy-L-fucose transferase (440 aa).

It carries out the reaction dTDP-2-deoxy-beta-L-fucose + aclacinomycin T = aclacinomycin S + dTDP + H(+). In terms of biological role, involved in the biosynthesis of the trisaccharide moiety characteristic of the antitumor drug aclacinomycins. In the first reaction, AknK catalyzes the transfer of 2-deoxy-beta-L-fucose from the activated donor dTDP-2-deoxy-beta-L-fucose to the mono-glycosylated aclacinomycin T (rhodosaminyl aklavinone), forming the di-glycosylated aclacinomycin S (L-2-deoxyfucosyl-L-rhodosaminyl aklavinone). It can also catalyze the addition of an alternate dTDP-L-sugar, dTDP-L-daunosamine, to aclacinomycin T and the addition of 2-deoxy-beta-L-fucose to the mono-glycosylated aglycones (monoglycosylated anthracyclines) such as daunomycin (daunorubicin), adriamycin (doxorubicin) and idarubicin. In vitro, AknK also catalyzes the addition of a second L-2-deoxyfucosyl moiety from dTDP-2-deoxy-beta-L-fucose, albeit with reduced activity, to the natural disaccharide chain of aclacinomycin S to produce L-deoxyfucosyl-L-deoxyfucosyl-L-rhodosaminyl aklavinone (2-deoxy-alpha-D-fucosyl-aclacinomycin S), a variant of the natural aclacinomycin A. The polypeptide is Aclacinomycin-T 2-deoxy-L-fucose transferase (Streptomyces galilaeus).